We begin with the raw amino-acid sequence, 1040 residues long: Multidrug resistance protein MdtB (1040 aa).

A run of 12 helical transmembrane segments spans residues 16–36, 347–367, 369–389, 396–416, 440–460, 472–492, 537–557, 863–883, 888–908, 911–931, 968–988, and 998–1018; these read FIMR…AGII, LMMA…NIPA, IIPG…MVFL, LTLM…IVVI, IGFT…PLLF, FAIT…TLTP, WLTL…WVFI, LGST…VLGI, FIHP…ALLA, IAGS…IGIV, ILMT…STGV, and IGMV…TPVI.

Belongs to the resistance-nodulation-cell division (RND) (TC 2.A.6) family. MdtB subfamily. In terms of assembly, part of a tripartite efflux system composed of MdtA, MdtB and MdtC. MdtB forms a heteromultimer with MdtC.

It localises to the cell inner membrane. Its function is as follows. The MdtABC tripartite complex confers resistance against novobiocin and deoxycholate. The polypeptide is Multidrug resistance protein MdtB (Escherichia coli (strain SE11)).